Consider the following 648-residue polypeptide: Beta-glucuronidase (648 aa).

Positions 1-22 (MSLKWSACWVALGQLLCSCALA) are cleaved as a signal peptide. 2 N-linked (GlcNAc...) asparagine glycosylation sites follow: Asn172 and Asn416. Residue Glu447 is the Proton donor of the active site. An N-linked (GlcNAc...) asparagine glycan is attached at Asn627.

The protein belongs to the glycosyl hydrolase 2 family. Homotetramer.

Its subcellular location is the lysosome. The protein resides in the endoplasmic reticulum. It catalyses the reaction a beta-D-glucuronoside + H2O = D-glucuronate + an alcohol. With respect to regulation, inhibited by L-aspartic acid. Plays an important role in the degradation of dermatan and keratan sulfates. The chain is Beta-glucuronidase (Gusb) from Mus musculus (Mouse).